Here is a 297-residue protein sequence, read N- to C-terminus: D-aminoacyl-tRNA deacylase (297 aa).

It belongs to the DtdA deacylase family. Monomer. The cofactor is Zn(2+).

It carries out the reaction a D-aminoacyl-tRNA + H2O = a tRNA + a D-alpha-amino acid + H(+). The enzyme catalyses glycyl-tRNA(Ala) + H2O = tRNA(Ala) + glycine + H(+). Functionally, D-aminoacyl-tRNA deacylase with broad substrate specificity. By recycling D-aminoacyl-tRNA to D-amino acids and free tRNA molecules, this enzyme counteracts the toxicity associated with the formation of D-aminoacyl-tRNA entities in vivo. This chain is D-aminoacyl-tRNA deacylase, found in Methanosarcina acetivorans (strain ATCC 35395 / DSM 2834 / JCM 12185 / C2A).